We begin with the raw amino-acid sequence, 436 residues long: MSDRQQVTNARGERIAIVSGLRTPFAKQATAFHGVSALDMGKMVVNELLARSELDPKEIEQLVYGQVVQMPAAPNIAREIVLGTGMNVSTDAYSVTRACATSFQSTVNVAESIMTGNLDIGIAGGADSSSVLPIGVSKKLAHALVDLNKARSLGQRLSIFRRLGLKDLLPVPPAVAEYSTGLSMGQTAEQMAKTYNISRADQDALAHRSHTLATETWNAGKLAEEVMVAHVPPYKAFIDRDNNIRENSKLESYAKLRPAFDRKHGSVTAANSTPLTDGASAVLLMSEGRAKALGYTPIGYIKSYAFTAIDVWEDMLMGPSYATPLALKRAGMELEDLTLIEMHEAFAAQTLANMQMFGSKKFAEEKLGRNRAIGEIDMSKFNVLGGSLAYGHPFAATGTRLVTQVCHELKRRGGGTGLATACAAGGLGAAMIVEVE.

Cys-99 acts as the Acyl-thioester intermediate in catalysis. Residues His-392 and Cys-422 each act as proton acceptor in the active site.

The protein belongs to the thiolase-like superfamily. Thiolase family. Heterotetramer of two alpha chains (FadJ) and two beta chains (FadI).

It is found in the cytoplasm. The catalysed reaction is an acyl-CoA + acetyl-CoA = a 3-oxoacyl-CoA + CoA. The protein operates within lipid metabolism; fatty acid beta-oxidation. In terms of biological role, catalyzes the final step of fatty acid oxidation in which acetyl-CoA is released and the CoA ester of a fatty acid two carbons shorter is formed. This Shewanella pealeana (strain ATCC 700345 / ANG-SQ1) protein is 3-ketoacyl-CoA thiolase.